A 318-amino-acid chain; its full sequence is Protein phosphatase 1 regulatory subunit 3C (318 aa).

Residues 84–87 (RVVF) carry the PP1-binding motif motif. The interaction with EPM2A stretch occupies residues 141-263 (PSADYLSFRN…YRIVHVQWKP (123 aa)). In terms of domain architecture, CBM21 spans 149–257 (RNHFQKNSVC…NNEGQNYRIV (109 aa)).

As to quaternary structure, interacts with PPP1CC catalytic subunit of PP1 and associates with glycogen. Forms complexes with glycogen phosphorylase, glycogen synthase and phosphorylase kinase which is necessary for its regulation of PP1 activity. Also interacts with EPM2A/laforin. Post-translationally, ubiquitinated by NHLRC1/malin in a EPM2A/laforin-dependent manner.

In terms of biological role, acts as a glycogen-targeting subunit for PP1 and regulates its activity. Activates glycogen synthase, reduces glycogen phosphorylase activity and limits glycogen breakdown. Dramatically increases basal and insulin-stimulated glycogen synthesis upon overexpression in a variety of cell types. This is Protein phosphatase 1 regulatory subunit 3C from Bos taurus (Bovine).